A 688-amino-acid polypeptide reads, in one-letter code: MARKYPLDKFRNFGIMAHIDAGKTTTTERILFYTGVSHKIGEVHDGEATMDWMVQEQERGITITSAATSCFWKEHELNIIDTPGHVDFTVEVERSLRVLDGAVTVLDAKSGVEPQTETVWRQADKYGVPRMIYVNKMDATGADFFRCIQTVKDRLKANAVPIQIPVGSEQGFKGMVDLIKNVAFIFYDDLGKDMREEAIPAEYADQAEEYRAAMIEAIAETDEELMEKYLEGEELTIEELKAALRKATIANEIYPCICGSSYKNKGVQEMIDGVVDYLPSPLDVPAIKGTTLDGEEDHRNSSDSEPLSALAFKIATDPFVGKLAFTRIYSGVMQSGSYVLNSTKGKKERIGRLVKMHSNSRSEVESLEAGEIGAVIGLKNTTTGDTLCAENSPIILEAMEFPEPVIRVAIEPKTKDAQEKMGMALAKLAEEDPTFKTWTDTETGQTIIAGMGELHLEIIVDRLQREFKVECNVGAPQVAYKETIRSAVKAEAKYAKQSGGKGQYGHAVIEMEPTEGEYVFENAVVGGAIPKEYIPAIDAGIQEASKNGIIAGYNVINFKVKLVHGSYHEVDSSEMAFKIAGSMAFKNAMSKASPVLLEPMMKVEVTVPEEYMGDVIGDINSRRGIMEGMEALNGAQVIRAFVPLSEMFGYATTLRSRTQGRGVYSMVFDHYDEVPKNIQEQIAGSRAK.

One can recognise a tr-type G domain in the interval 8-282 (DKFRNFGIMA…GVVDYLPSPL (275 aa)). GTP-binding positions include 17–24 (AHIDAGKT), 81–85 (DTPGH), and 135–138 (NKMD).

This sequence belongs to the TRAFAC class translation factor GTPase superfamily. Classic translation factor GTPase family. EF-G/EF-2 subfamily.

Its subcellular location is the cytoplasm. Its function is as follows. Catalyzes the GTP-dependent ribosomal translocation step during translation elongation. During this step, the ribosome changes from the pre-translocational (PRE) to the post-translocational (POST) state as the newly formed A-site-bound peptidyl-tRNA and P-site-bound deacylated tRNA move to the P and E sites, respectively. Catalyzes the coordinated movement of the two tRNA molecules, the mRNA and conformational changes in the ribosome. In Clostridium beijerinckii (strain ATCC 51743 / NCIMB 8052) (Clostridium acetobutylicum), this protein is Elongation factor G.